Here is a 355-residue protein sequence, read N- to C-terminus: 3-dehydroquinate synthase (355 aa).

Residues 71–76 (EGEERK), 105–109 (GVVGD), 129–130 (TS), Lys142, and Lys151 each bind NAD(+). Zn(2+) contacts are provided by Glu184, His246, and His263.

This sequence belongs to the sugar phosphate cyclases superfamily. Dehydroquinate synthase family. It depends on NAD(+) as a cofactor. Co(2+) is required as a cofactor. Requires Zn(2+) as cofactor.

It localises to the cytoplasm. The enzyme catalyses 7-phospho-2-dehydro-3-deoxy-D-arabino-heptonate = 3-dehydroquinate + phosphate. The protein operates within metabolic intermediate biosynthesis; chorismate biosynthesis; chorismate from D-erythrose 4-phosphate and phosphoenolpyruvate: step 2/7. Catalyzes the conversion of 3-deoxy-D-arabino-heptulosonate 7-phosphate (DAHP) to dehydroquinate (DHQ). This is 3-dehydroquinate synthase from Streptococcus pneumoniae serotype 4 (strain ATCC BAA-334 / TIGR4).